A 228-amino-acid chain; its full sequence is Carboxylesterase SOBER1 (228 aa).

Residues Ser-106, Asp-160, and His-192 each act as charge relay system in the active site.

It belongs to the AB hydrolase superfamily. AB hydrolase 2 family.

Possesses carboxylesterase activity in vitro with a preference for short acyl chain substrates. Functions as a negative regulator of the hypersensitive response (HR) triggered by the bacterial type III effector protein AvrBsT. Possesses phospholipase A2 (PLA2) activity and hydrolyzes phosphatidylcholine (PC), a lipid that is hydrolyzed by phospholipase D (PLD) to produce phosphatidic acid (PA). Required to suppress AvrBsT-dependent HR and PLD-dependent production of PA in response to AvrBsT elicitation. The chain is Carboxylesterase SOBER1 from Arabidopsis thaliana (Mouse-ear cress).